The following is a 346-amino-acid chain: tRNA N6-adenosine threonylcarbamoyltransferase (346 aa).

Residues His-111 and His-115 each coordinate Fe cation. Residues 134–138, Asp-167, Gly-180, and Asn-279 each bind substrate; that span reads LVSGG. Residue Asp-307 coordinates Fe cation.

It belongs to the KAE1 / TsaD family. Requires Fe(2+) as cofactor.

The protein resides in the cytoplasm. It carries out the reaction L-threonylcarbamoyladenylate + adenosine(37) in tRNA = N(6)-L-threonylcarbamoyladenosine(37) in tRNA + AMP + H(+). Functionally, required for the formation of a threonylcarbamoyl group on adenosine at position 37 (t(6)A37) in tRNAs that read codons beginning with adenine. Is involved in the transfer of the threonylcarbamoyl moiety of threonylcarbamoyl-AMP (TC-AMP) to the N6 group of A37, together with TsaE and TsaB. TsaD likely plays a direct catalytic role in this reaction. This Burkholderia thailandensis (strain ATCC 700388 / DSM 13276 / CCUG 48851 / CIP 106301 / E264) protein is tRNA N6-adenosine threonylcarbamoyltransferase.